The sequence spans 1274 residues: Protein ECM30 (1274 aa).

3 disordered regions span residues 23 to 42, 405 to 439, and 494 to 517; these read EDAD…SLSV, RRAV…QTKP, and SSSS…DTSN. Low complexity-rich tracts occupy residues 27–42, 409–432, and 494–515; these read ASSP…SLSV, STSS…AAYH, and SSSS…SNDT. A Phosphoserine modification is found at Ser-635. A compositionally biased stretch (low complexity) spans 803–822; sequence NQQHQNQQQGQNDNRGQNQN. A disordered region spans residues 803-842; sequence NQQHQNQQQGQNDNRGQNQNEDPGQENESPTPYLLFNPAS. Position 1065 is a phosphoserine (Ser-1065). Positions 1100–1149 are disordered; the sequence is HLRSSSSSSSITLEKTTSNSSSIRTRPNSHHVAPETNNNNSTNGNSNNSS. Residues 1110–1125 are compositionally biased toward polar residues; sequence ITLEKTTSNSSSIRTR. The span at 1135–1149 shows a compositional bias: low complexity; that stretch reads TNNNNSTNGNSNNSS.

The protein resides in the cytoplasm. Its function is as follows. Seems to be involved in cell wall organization and biogenesis. This chain is Protein ECM30 (ECM30), found in Saccharomyces cerevisiae (strain ATCC 204508 / S288c) (Baker's yeast).